The primary structure comprises 345 residues: MNTEASQDQTVTETPGVRLRQARESLGLTQQTVAERLCLKVSTIRDIEEDNAQANLASTFHRGYIRSYAKLVHLPEDELLPILEKQAPVRAAKVAPMQSFSLGKKHKKRDGWLMSFTWLIVLVVLGLTGAWWWQNHQAQQAEIANMVDQSSAQLSQNGGQPVPLTDDNSDAIAPTDAPAPVANGQPVPLTNHSGSAITNSATTSSVPKTTSTEPVDTANTNTTMHQEGAASAAVSPSQVPQPGMPTGQPPLPTADAGVSGSASSVGALVMNFTADCWLQVVDATGKTLFSGIQKGGAVLNLAGKAPYKLTIGAPGALTISYQGNPVDLSKFIKANRVARLTVCVE.

The Cytoplasmic segment spans residues 1-111 (MNTEASQDQT…LGKKHKKRDG (111 aa)). An HTH cro/C1-type domain is found at 19–79 (LRQARESLGL…KLVHLPEDEL (61 aa)). Residues 30-49 (QQTVAERLCLKVSTIRDIEE) constitute a DNA-binding region (H-T-H motif). The helical; Signal-anchor for type II membrane protein transmembrane segment at 112–132 (WLMSFTWLIVLVVLGLTGAWW) threads the bilayer. The Periplasmic portion of the chain corresponds to 133-345 (WQNHQAQQAE…RVARLTVCVE (213 aa)). Positions 151 to 259 (SAQLSQNGGQ…PLPTADAGVS (109 aa)) are disordered. The span at 188–225 (PLTNHSGSAITNSATTSSVPKTTSTEPVDTANTNTTMH) shows a compositional bias: polar residues. The segment covering 229-241 (AASAAVSPSQVPQ) has biased composition (low complexity).

The protein belongs to the RodZ family.

It is found in the cell inner membrane. Its function is as follows. Cytoskeletal protein that is involved in cell-shape control through regulation of the length of the long axis. In Yersinia pestis bv. Antiqua (strain Antiqua), this protein is Cytoskeleton protein RodZ.